A 116-amino-acid chain; its full sequence is Endoribonuclease toxin ChpB (116 aa).

This sequence belongs to the PemK/MazF family. In terms of assembly, homodimer, interacts with ChpS, which inhibits the endoribonuclease activity.

Stimulated in vitro in a concentration-dependent fashion by extracellular death factor (EDF, a quorum sensing pentapeptide sequence NNWNN, probably produced from the zwf gene product glucose-6-phosphate 1-dehydrogenase), which is able to overcome inhibition by cognate antitoxin ChpS. Toxic component of a type II toxin-antitoxin (TA) system. ChpB is a sequence-specific mRNA and (weak) tmRNA endoribonuclease that inhibits protein synthesis and induces bacterial stasis. Cleavage is independent of the ribosome. Cleavage occurs at ACY sequences where Y is not C. The endoribonuclease activity is not as strong as that of MazF. The endoribonuclease activity (a toxin) is inhibited by its labile cognate antitoxin ChpS. Toxicity results when the levels of ChpS decrease in the cell, leading to mRNA degradation. Both ChpS and ChpB probably bind to the promoter region of the chpS-chpB operon to autoregulate their synthesis. The polypeptide is Endoribonuclease toxin ChpB (chpB) (Escherichia coli (strain K12)).